The sequence spans 428 residues: Adenylosuccinate synthetase (428 aa).

Residues 12–18 (GDEGKGK) and 40–42 (GHT) each bind GTP. Asp-13 serves as the catalytic Proton acceptor. Residues Asp-13 and Gly-40 each coordinate Mg(2+). IMP is bound by residues 13–16 (DEGK), 38–41 (NAGH), Thr-128, Arg-142, Gln-223, Thr-238, and Arg-302. His-41 serves as the catalytic Proton donor. Substrate is bound at residue 298-304 (VTTGRPR). Residues Arg-304, 330-332 (KLD), and 412-414 (GTG) contribute to the GTP site.

This sequence belongs to the adenylosuccinate synthetase family. Homodimer. The cofactor is Mg(2+).

The protein resides in the cytoplasm. It carries out the reaction IMP + L-aspartate + GTP = N(6)-(1,2-dicarboxyethyl)-AMP + GDP + phosphate + 2 H(+). The protein operates within purine metabolism; AMP biosynthesis via de novo pathway; AMP from IMP: step 1/2. Its function is as follows. Plays an important role in the de novo pathway of purine nucleotide biosynthesis. Catalyzes the first committed step in the biosynthesis of AMP from IMP. The sequence is that of Adenylosuccinate synthetase from Bifidobacterium animalis subsp. lactis (strain AD011).